Reading from the N-terminus, the 216-residue chain is Translation initiation factor 6 (216 aa).

Belongs to the eIF-6 family.

Binds to the 50S ribosomal subunit and prevents its association with the 30S ribosomal subunit to form the 70S initiation complex. This Thermoplasma acidophilum (strain ATCC 25905 / DSM 1728 / JCM 9062 / NBRC 15155 / AMRC-C165) protein is Translation initiation factor 6.